The following is a 256-amino-acid chain: tRNA (guanine-N(1)-)-methyltransferase (256 aa).

S-adenosyl-L-methionine-binding positions include Gly117 and 137–142 (LGDFVL).

The protein belongs to the RNA methyltransferase TrmD family. As to quaternary structure, homodimer.

The protein localises to the cytoplasm. The catalysed reaction is guanosine(37) in tRNA + S-adenosyl-L-methionine = N(1)-methylguanosine(37) in tRNA + S-adenosyl-L-homocysteine + H(+). Specifically methylates guanosine-37 in various tRNAs. The chain is tRNA (guanine-N(1)-)-methyltransferase from Methylibium petroleiphilum (strain ATCC BAA-1232 / LMG 22953 / PM1).